We begin with the raw amino-acid sequence, 563 residues long: Arginine--tRNA ligase (563 aa).

A 'HIGH' region motif is present at residues 121–131 (PNIAKPFSIGH).

The protein belongs to the class-I aminoacyl-tRNA synthetase family. In terms of assembly, monomer.

The protein resides in the cytoplasm. It catalyses the reaction tRNA(Arg) + L-arginine + ATP = L-arginyl-tRNA(Arg) + AMP + diphosphate. This chain is Arginine--tRNA ligase, found in Streptococcus agalactiae serotype Ia (strain ATCC 27591 / A909 / CDC SS700).